The chain runs to 359 residues: NADH-quinone oxidoreductase subunit H (359 aa).

A run of 8 helical transmembrane segments spans residues 16 to 36 (IWPATVWPVLWALIKIVCVLL), 94 to 114 (GLFVLGPIMTIMPALAAWAVI), 129 to 149 (LLFLMAITSMEVYGVIIAGWA), 167 to 187 (VSYEIAMGFCLVVVLMVSASL), 208 to 228 (FLSWNWLPLLPIFVVYFISGL), 261 to 281 (FFLAEYANMWLVAILAVILFL), 296 to 316 (IPGWIWLGAKTFVVVTMFLWV), and 331 to 351 (LGWKIFIPVTLVWLVVVGAWM).

This sequence belongs to the complex I subunit 1 family. As to quaternary structure, NDH-1 is composed of 14 different subunits. Subunits NuoA, H, J, K, L, M, N constitute the membrane sector of the complex.

The protein resides in the cell inner membrane. It catalyses the reaction a quinone + NADH + 5 H(+)(in) = a quinol + NAD(+) + 4 H(+)(out). Functionally, NDH-1 shuttles electrons from NADH, via FMN and iron-sulfur (Fe-S) centers, to quinones in the respiratory chain. The immediate electron acceptor for the enzyme in this species is believed to be ubiquinone. Couples the redox reaction to proton translocation (for every two electrons transferred, four hydrogen ions are translocated across the cytoplasmic membrane), and thus conserves the redox energy in a proton gradient. This subunit may bind ubiquinone. The protein is NADH-quinone oxidoreductase subunit H of Polaromonas sp. (strain JS666 / ATCC BAA-500).